Here is a 360-residue protein sequence, read N- to C-terminus: MTTTLQQRESASLWEQFCQWITSTNNRLYVGWFGVIMIPTLLTATTCFIIAFIAAPPVDIDGIREPVAGSLLYGNNIISGAVVPSSNAIGLHFYPIWEAASLDEWLYNGGPYQLVIFHFLLGVFCYLGRQWELSFRLGMRPWICVAYSAPVSAATAVFLIYPIGQGSFSDGMPLGISGTFNFMFVFQAEHNILMHPFHMLGVAGVFGGSLFSAMHGSLVTSSLVRETTEIESQNYGYKFGQEEETYNIVAAHGYFGRLIFQYASFNNSRSLHFFLGAWPVIGIWFTAMGVSTMAFNLNGFNFNQSILDSQGRVIGTWVDVLNRAGIGMEVMHERNAHNFPLDLASGEQAPVALTAPAING.

3 consecutive transmembrane segments (helical) span residues 29-46 (YVGW…TATT), 118-133 (HFLL…QWEL), and 142-156 (WICV…AATA). H118 lines the chlorophyll a pocket. Y126 lines the pheophytin a pocket. 2 residues coordinate [CaMn4O5] cluster: D170 and E189. Residues 197-218 (FHMLGVAGVFGGSLFSAMHGSL) form a helical membrane-spanning segment. A chlorophyll a-binding site is contributed by H198. A quinone-binding positions include H215 and 264 to 265 (SF). A Fe cation-binding site is contributed by H215. H272 serves as a coordination point for Fe cation. A helical transmembrane segment spans residues 274-288 (FLGAWPVIGIWFTAM). [CaMn4O5] cluster-binding residues include H332, E333, D342, and A344. The propeptide occupies 345-360 (SGEQAPVALTAPAING).

Belongs to the reaction center PufL/M/PsbA/D family. In terms of assembly, PSII is composed of 1 copy each of membrane proteins PsbA, PsbB, PsbC, PsbD, PsbE, PsbF, PsbH, PsbI, PsbJ, PsbK, PsbL, PsbM, PsbT, PsbX, PsbY, PsbZ, Psb30/Ycf12, peripheral proteins PsbO, CyanoQ (PsbQ), PsbU, PsbV and a large number of cofactors. It forms dimeric complexes. The D1/D2 heterodimer binds P680, chlorophylls that are the primary electron donor of PSII, and subsequent electron acceptors. It shares a non-heme iron and each subunit binds pheophytin, quinone, additional chlorophylls, carotenoids and lipids. D1 provides most of the ligands for the Mn4-Ca-O5 cluster of the oxygen-evolving complex (OEC). There is also a Cl(-1) ion associated with D1 and D2, which is required for oxygen evolution. The PSII complex binds additional chlorophylls, carotenoids and specific lipids. is required as a cofactor. Tyr-161 forms a radical intermediate that is referred to as redox-active TyrZ, YZ or Y-Z. In terms of processing, C-terminally processed by CtpA; processing is essential to allow assembly of the oxygen-evolving complex and thus photosynthetic growth.

It localises to the cellular thylakoid membrane. The catalysed reaction is 2 a plastoquinone + 4 hnu + 2 H2O = 2 a plastoquinol + O2. Functionally, photosystem II (PSII) is a light-driven water:plastoquinone oxidoreductase that uses light energy to abstract electrons from H(2)O, generating O(2) and a proton gradient subsequently used for ATP formation. It consists of a core antenna complex that captures photons, and an electron transfer chain that converts photonic excitation into a charge separation. The D1/D2 (PsbA/PsbD) reaction center heterodimer binds P680, the primary electron donor of PSII as well as several subsequent electron acceptors. The sequence is that of Photosystem II protein D1 from Microcystis aeruginosa.